The chain runs to 177 residues: Small ribosomal subunit protein uS5 (177 aa).

One can recognise an S5 DRBM domain in the interval 21–84; the sequence is LKEKMISVNR…DEARRGMIKI (64 aa).

The protein belongs to the universal ribosomal protein uS5 family. Part of the 30S ribosomal subunit. Contacts proteins S4 and S8.

In terms of biological role, with S4 and S12 plays an important role in translational accuracy. Located at the back of the 30S subunit body where it stabilizes the conformation of the head with respect to the body. The protein is Small ribosomal subunit protein uS5 of Nitrosomonas eutropha (strain DSM 101675 / C91 / Nm57).